A 105-amino-acid chain; its full sequence is Biogenesis of lysosome-related organelles complex 1 subunit SNN1 (105 aa).

The stretch at 70–105 (WKDDNERLDSLRKRVDSLKSRFQSLKLRSDKLEQRE) forms a coiled coil.

It belongs to the SNAPIN family. As to quaternary structure, component of the biogenesis of lysosome-related organelles complex-1 (BLOC-1).

The protein resides in the endosome. Functionally, component of the biogenesis of lysosome-related organelles complex-1 (BLOC-1), a complex involved in endosomal cargo sorting. The polypeptide is Biogenesis of lysosome-related organelles complex 1 subunit SNN1 (SNN1) (Zygosaccharomyces rouxii (strain ATCC 2623 / CBS 732 / NBRC 1130 / NCYC 568 / NRRL Y-229)).